A 60-amino-acid chain; its full sequence is DNA-directed RNA polymerase subunit Rpo6 (60 aa).

This sequence belongs to the archaeal Rpo6/eukaryotic RPB6 RNA polymerase subunit family. In terms of assembly, part of the RNA polymerase complex.

Its subcellular location is the cytoplasm. It carries out the reaction RNA(n) + a ribonucleoside 5'-triphosphate = RNA(n+1) + diphosphate. DNA-dependent RNA polymerase (RNAP) catalyzes the transcription of DNA into RNA using the four ribonucleoside triphosphates as substrates. The polypeptide is DNA-directed RNA polymerase subunit Rpo6 (Halobacterium salinarum (strain ATCC 700922 / JCM 11081 / NRC-1) (Halobacterium halobium)).